Here is a 158-residue protein sequence, read N- to C-terminus: NADH-quinone oxidoreductase subunit B (158 aa).

[4Fe-4S] cluster-binding residues include Cys-37, Cys-38, Cys-102, and Cys-132.

Belongs to the complex I 20 kDa subunit family. As to quaternary structure, NDH-1 is composed of 14 different subunits. Subunits NuoB, C, D, E, F, and G constitute the peripheral sector of the complex. It depends on [4Fe-4S] cluster as a cofactor.

It is found in the cell inner membrane. The catalysed reaction is a quinone + NADH + 5 H(+)(in) = a quinol + NAD(+) + 4 H(+)(out). In terms of biological role, NDH-1 shuttles electrons from NADH, via FMN and iron-sulfur (Fe-S) centers, to quinones in the respiratory chain. Couples the redox reaction to proton translocation (for every two electrons transferred, four hydrogen ions are translocated across the cytoplasmic membrane), and thus conserves the redox energy in a proton gradient. The sequence is that of NADH-quinone oxidoreductase subunit B from Nitrosomonas europaea (strain ATCC 19718 / CIP 103999 / KCTC 2705 / NBRC 14298).